The following is a 258-amino-acid chain: Type III pantothenate kinase (258 aa).

6–13 is a binding site for ATP; the sequence is DVGNTNTV. Substrate contacts are provided by residues Tyr-100 and 107 to 110; that span reads GADR. Asp-109 acts as the Proton acceptor in catalysis. Asp-129 contributes to the K(+) binding site. Residue Thr-132 coordinates ATP. Thr-184 contacts substrate.

It belongs to the type III pantothenate kinase family. In terms of assembly, homodimer. Requires NH4(+) as cofactor. The cofactor is K(+).

Its subcellular location is the cytoplasm. The enzyme catalyses (R)-pantothenate + ATP = (R)-4'-phosphopantothenate + ADP + H(+). The protein operates within cofactor biosynthesis; coenzyme A biosynthesis; CoA from (R)-pantothenate: step 1/5. Catalyzes the phosphorylation of pantothenate (Pan), the first step in CoA biosynthesis. This Bacillus licheniformis (strain ATCC 14580 / DSM 13 / JCM 2505 / CCUG 7422 / NBRC 12200 / NCIMB 9375 / NCTC 10341 / NRRL NRS-1264 / Gibson 46) protein is Type III pantothenate kinase.